The following is a 93-amino-acid chain: UPF0147 protein PH1921.2 (93 aa).

It belongs to the UPF0147 family.

This chain is UPF0147 protein PH1921.2, found in Pyrococcus horikoshii (strain ATCC 700860 / DSM 12428 / JCM 9974 / NBRC 100139 / OT-3).